The following is a 283-amino-acid chain: Protoheme IX farnesyltransferase (283 aa).

7 helical membrane passes run 13 to 33 (ISSV…PTGL), 35 to 55 (GGTL…VGTL), 90 to 110 (ILLV…LTAV), 156 to 176 (LGAG…PHFL), 208 to 228 (MIGF…TEAA), 230 to 250 (WIYG…TIVF), and 262 to 282 (VLKA…VDWF).

Belongs to the UbiA prenyltransferase family. Protoheme IX farnesyltransferase subfamily.

It is found in the cell inner membrane. The catalysed reaction is heme b + (2E,6E)-farnesyl diphosphate + H2O = Fe(II)-heme o + diphosphate. It functions in the pathway porphyrin-containing compound metabolism; heme O biosynthesis; heme O from protoheme: step 1/1. Functionally, converts heme B (protoheme IX) to heme O by substitution of the vinyl group on carbon 2 of heme B porphyrin ring with a hydroxyethyl farnesyl side group. This chain is Protoheme IX farnesyltransferase, found in Salinibacter ruber (strain DSM 13855 / M31).